We begin with the raw amino-acid sequence, 207 residues long: Dephospho-CoA kinase (207 aa).

Residues Ile-10–Pro-207 form the DPCK domain. Gly-18–Ala-23 contacts ATP.

Belongs to the CoaE family.

It localises to the cytoplasm. It catalyses the reaction 3'-dephospho-CoA + ATP = ADP + CoA + H(+). It participates in cofactor biosynthesis; coenzyme A biosynthesis; CoA from (R)-pantothenate: step 5/5. Functionally, catalyzes the phosphorylation of the 3'-hydroxyl group of dephosphocoenzyme A to form coenzyme A. The chain is Dephospho-CoA kinase from Pseudomonas putida (strain ATCC 47054 / DSM 6125 / CFBP 8728 / NCIMB 11950 / KT2440).